Consider the following 186-residue polypeptide: Dynactin subunit 3 (186 aa).

A2 is subject to N-acetylalanine. A coiled-coil region spans residues N46–K66.

This sequence belongs to the dynactin subunit 3 family. Subunit of dynactin, a multiprotein complex part of a tripartite complex with dynein and a adapter, such as BICDL1, BICD2 or HOOK3. The dynactin complex is built around ACTR1A/ACTB filament and consists of an actin-related filament composed of a shoulder domain, a pointed end and a barbed end. Its length is defined by its flexible shoulder domain. The soulder is composed of 2 DCTN1 subunits, 4 DCTN2 and 2 DCTN3. The 4 DCNT2 (via N-terminus) bind the ACTR1A filament and act as molecular rulers to determine the length. The pointed end is important for binding dynein-dynactin cargo adapters. Consists of 4 subunits: ACTR10, DCNT4, DCTN5 and DCTN6. The barbed end is composed of a CAPZA1:CAPZB heterodimers, which binds ACTR1A/ACTB filament and dynactin and stabilizes dynactin.

Its subcellular location is the cytoplasm. It is found in the cytoskeleton. The protein localises to the microtubule organizing center. It localises to the centrosome. The protein resides in the chromosome. Its subcellular location is the centromere. It is found in the kinetochore. The protein localises to the spindle. It localises to the cleavage furrow. The protein resides in the midbody. Its function is as follows. Part of the dynactin complex that activates the molecular motor dynein for ultra-processive transport along microtubules. Together with dynein may be involved in spindle assembly and cytokinesis. This Mus musculus (Mouse) protein is Dynactin subunit 3.